Here is a 251-residue protein sequence, read N- to C-terminus: Phosphate import ATP-binding protein PstB 2 (251 aa).

In terms of domain architecture, ABC transporter spans 5–246; it reads ITTKDVHLYY…PDKEQTADYL (242 aa). Residue 37 to 44 coordinates ATP; that stretch reads GPSGCGKS.

It belongs to the ABC transporter superfamily. Phosphate importer (TC 3.A.1.7) family. In terms of assembly, the complex is composed of two ATP-binding proteins (PstB), two transmembrane proteins (PstC and PstA) and a solute-binding protein (PstS).

The protein localises to the cell membrane. It catalyses the reaction phosphate(out) + ATP + H2O = ADP + 2 phosphate(in) + H(+). Part of the ABC transporter complex PstSACB involved in phosphate import. Responsible for energy coupling to the transport system. The protein is Phosphate import ATP-binding protein PstB 2 of Ligilactobacillus salivarius (strain UCC118) (Lactobacillus salivarius).